The chain runs to 81 residues: Escargot/snail protein homolog (81 aa).

C2H2-type zinc fingers lie at residues 1–5, 17–39, 43–65, and 71–81; these read HQQFH, FSCK…IRTH, CKCH…IRTH, and FSCQHCNRAFA.

The protein belongs to the snail C2H2-type zinc-finger protein family.

The protein resides in the nucleus. This Apis mellifera (Honeybee) protein is Escargot/snail protein homolog.